Reading from the N-terminus, the 146-residue chain is Phospholipase A2 (146 aa).

Residues 1–18 (MAFLVFAFLTLMAVETYG) form the signal peptide. 7 disulfide bridges follow: Cys-44–Cys-137, Cys-46–Cys-62, Cys-61–Cys-117, Cys-67–Cys-144, Cys-68–Cys-110, Cys-77–Cys-103, and Cys-95–Cys-108. Ca(2+) is bound by residues Tyr-45, Gly-47, and Gly-49. The active site involves His-65. Asp-66 lines the Ca(2+) pocket. A glycan (N-linked (GlcNAc...) asparagine) is linked at Asn-85. Asp-111 is an active-site residue. Asn-126 carries N-linked (GlcNAc...) asparagine glycosylation.

The cofactor is Ca(2+). Post-translationally, N-glycosylated. Glycosylated with mannose chains including Man2(GlcNAc), Man2(GlcNAc)2, Man2(GlcNAc)3, Man2(GlcNAc)4 and Man2(GlcNAc)5. Expressed by the skin glands (at protein level).

The protein localises to the secreted. The enzyme catalyses a 1,2-diacyl-sn-glycero-3-phosphocholine + H2O = a 1-acyl-sn-glycero-3-phosphocholine + a fatty acid + H(+). Its function is as follows. PLA2 catalyzes the calcium-dependent hydrolysis of the 2-acyl groups in 3-sn-phosphoglycerides. The polypeptide is Phospholipase A2 (Pithecopus azureus (Orange-legged monkey tree frog)).